We begin with the raw amino-acid sequence, 158 residues long: Putative pre-16S rRNA nuclease (158 aa).

Belongs to the YqgF nuclease family.

The protein resides in the cytoplasm. In terms of biological role, could be a nuclease involved in processing of the 5'-end of pre-16S rRNA. The chain is Putative pre-16S rRNA nuclease from Hahella chejuensis (strain KCTC 2396).